The primary structure comprises 237 residues: Cuticlin-like protein 19 (237 aa).

An N-terminal signal peptide occupies residues 1–20 (MVEYNRIFCVLVIFSTTIKC).

As to quaternary structure, interacts with vps-51 and vps-52. As to expression, expression detected in motor neurons.

It localises to the golgi apparatus. The protein localises to the trans-Golgi network. The polypeptide is Cuticlin-like protein 19 (cutl-19) (Caenorhabditis elegans).